A 689-amino-acid chain; its full sequence is Histone-lysine N-methyltransferase MEDEA (689 aa).

3 disordered regions span residues 1–20 (MEKE…LNQI), 51–73 (HQSF…KSLL), and 169–188 (ELSS…EIKK). The interaction with FIE stretch occupies residues 1 to 109 (MEKENHEDDG…DEDQDYALEE (109 aa)). Residues 171–184 (SSEEDEEDEEEDEE) are compositionally biased toward acidic residues. One can recognise an SANT domain in the interval 339-389 (NNTMWTPVEKDLYLKGIEIFGRNSCDVALNILRGLKTCLEIYNYMREQDQC). Positions 428–532 (RYPPALKKTT…TLGETPVQIQ (105 aa)) constitute a CXC domain. An SET domain is found at 544-659 (KKILIGKSDV…EGEELFFDYC (116 aa)). Residues 666–689 (DWSRGREPRKTGASKRSKEARPAR) are disordered.

The protein belongs to the class V-like SAM-binding methyltransferase superfamily. Histone-lysine methyltransferase family. EZ subfamily. Interacts directly with FIE via its N-terminal domain. These two proteins are probably indirectly associated with FIS2. In plants, PcG complexes are probably composed of a member of the EZ family (CLF or MEA), FIE, and a member of the VEFS family (FIS2, VRN2 or EMF2). Interacts with TAF13. In terms of tissue distribution, expressed in unpollinated siliques that contain maturing gametophytes. Not expressed at early stages of floral development during early megagametogenesis.

It is found in the nucleus. The enzyme catalyses L-lysyl(27)-[histone H3] + 3 S-adenosyl-L-methionine = N(6),N(6),N(6)-trimethyl-L-lysyl(27)-[histone H3] + 3 S-adenosyl-L-homocysteine + 3 H(+). Polycomb group (PcG) protein. Catalytic subunit of some PcG multiprotein complex, which methylates 'Lys-27' of histone H3, leading to transcriptional repression of the affected target genes. Required to prevent the proliferation of the central cell of the female gametophyte by repressing target genes before fertilization. After fertilization, it probably also regulates the embryo and endosperm proliferation and anteroposterior organization during seed development. PcG proteins act by forming multiprotein complexes, which are required to maintain the transcriptionally repressive state of homeotic genes throughout development. PcG proteins are not required to initiate repression, but to maintain it during later stages of development. Interacts with the promoter and repress the transcription of genes such as PHE1 and PHE2, that are paternally active and maternally silenced genes. The protein is Histone-lysine N-methyltransferase MEDEA (MEA) of Arabidopsis thaliana (Mouse-ear cress).